Reading from the N-terminus, the 305-residue chain is tRNA pseudouridine synthase B (305 aa).

Aspartate 48 serves as the catalytic Nucleophile.

Belongs to the pseudouridine synthase TruB family. Type 1 subfamily.

The enzyme catalyses uridine(55) in tRNA = pseudouridine(55) in tRNA. Its function is as follows. Responsible for synthesis of pseudouridine from uracil-55 in the psi GC loop of transfer RNAs. The polypeptide is tRNA pseudouridine synthase B (Pseudomonas fluorescens (strain ATCC BAA-477 / NRRL B-23932 / Pf-5)).